The chain runs to 225 residues: MVTRERAENRDGPKMLKPLVEKRRRDRINRSLEELRLLLLERTRDQNLRNPKLEKAEILEFAVGYLRERSRVEPPGVPRSPGQDAEALASCYLSGFRECLLRLAAFAHDASPAARSQLFSALHGYRRPKPPRPEAVDPGLPAPRPPLDPASPILGPALHQRPPVHQGPPSPRLAWSPSHCSSRAGDSGAPAPLTGLLPPPPPPYRQDGAPKAPSLPPPAFWRPWP.

The bHLH domain maps to 12-69 (GPKMLKPLVEKRRRDRINRSLEELRLLLLERTRDQNLRNPKLEKAEILEFAVGYLRER). One can recognise an Orange domain in the interval 92–122 (YLSGFRECLLRLAAFAHDASPAARSQLFSAL). The segment at 124–225 (GYRRPKPPRP…PPPAFWRPWP (102 aa)) is disordered. Pro residues-rich tracts occupy residues 140–149 (LPAPRPPLDP) and 213–225 (PSLP…RPWP). The WRPW motif signature appears at 221–224 (WRPW).

As to quaternary structure, transcription repression requires formation of a complex with a corepressor protein of the Groucho/TLE family.

It is found in the nucleus. Functionally, transcriptional repressor. Represses transcription from both N box- and E box-containing promoters. May with HES1, cooperatively regulate somite formation in the presomitic mesoderm (PSM). May function as a segmentation clock, which is essential for coordinated somite segmentation. This is Transcription factor HES-7 (Hes7) from Mus musculus (Mouse).